The following is a 69-amino-acid chain: Pantinin-1 (69 aa).

Residues 1–23 (MKTQFVILMITVILMQMLVQTEG) form the signal peptide. V37 carries the post-translational modification Valine amide. The propeptide occupies 41 to 69 (GLNDRDQLDDLFDSDLSDADIKLLKEMFK).

The protein belongs to the non-disulfide-bridged peptide (NDBP) superfamily. Short antimicrobial peptide (group 4) family. As to expression, expressed by the venom gland.

Its subcellular location is the secreted. It is found in the target cell membrane. Functionally, amphipathic peptide that possesses relatively strong activities against Gram-positive bacteria and a fungus, but has very weak antimicrobial activities against Gram-negative bacteria. Also exhibits very low hemolytic activities against human erythrocytes (64 uM induce 21% of hemolysis). Minimal inhibitory concentration (MIC) are the following: 8 uM against S.aureus, 32 uM against B.magaterium, 32 uM against M.luteus, 28 uM against vancomycin-resistant Enterococci, 14 uM against methicillin-resistant S.aureus, 62 uM against E.coli, &gt;87 uM against P.putida, &gt;87 uM against K.oxytoca, 76 uM against E.cloacae, 72 uM against S.enterica and 16 uM against the fungus C.tropicalis. This chain is Pantinin-1, found in Pandinus imperator (Emperor scorpion).